A 230-amino-acid polypeptide reads, in one-letter code: ATP phosphoribosyltransferase (230 aa).

It belongs to the ATP phosphoribosyltransferase family. Short subfamily. In terms of assembly, heteromultimer composed of HisG and HisZ subunits.

It is found in the cytoplasm. It catalyses the reaction 1-(5-phospho-beta-D-ribosyl)-ATP + diphosphate = 5-phospho-alpha-D-ribose 1-diphosphate + ATP. The protein operates within amino-acid biosynthesis; L-histidine biosynthesis; L-histidine from 5-phospho-alpha-D-ribose 1-diphosphate: step 1/9. Functionally, catalyzes the condensation of ATP and 5-phosphoribose 1-diphosphate to form N'-(5'-phosphoribosyl)-ATP (PR-ATP). Has a crucial role in the pathway because the rate of histidine biosynthesis seems to be controlled primarily by regulation of HisG enzymatic activity. The protein is ATP phosphoribosyltransferase of Agrobacterium fabrum (strain C58 / ATCC 33970) (Agrobacterium tumefaciens (strain C58)).